Reading from the N-terminus, the 373-residue chain is Stationary phase protein 5 (373 aa).

In terms of biological role, required for survival at high temperature during stationary phase. The chain is Stationary phase protein 5 (SPG5) from Saccharomyces cerevisiae (strain ATCC 204508 / S288c) (Baker's yeast).